Reading from the N-terminus, the 946-residue chain is Ent-kaur-16-ene synthase (946 aa).

Mg(2+) is bound by residues Asp-656, Glu-660, Asn-839, Asp-840, Ser-843, and Asp-847. The short motif at 656–660 is the DEXXE motif element; sequence DEFFE.

The protein belongs to the terpene synthase family. Mg(2+) serves as cofactor.

It carries out the reaction ent-copalyl diphosphate = ent-kaur-16-ene + diphosphate. The enzyme catalyses (2E,6E,10E)-geranylgeranyl diphosphate = ent-copalyl diphosphate. Its pathway is plant hormone biosynthesis; gibberellin biosynthesis. Catalyzes the conversion of geranylgeranyl diphosphate to the gibberellin precursor ent-kaurene diphosphate in a two step process. The sequence is that of Ent-kaur-16-ene synthase from Phaeosphaeria sp. (strain L487).